The sequence spans 190 residues: Somatotropin (190 aa).

Positions 1–17 are cleaved as a signal peptide; that stretch reads MNRVILLLSVMCVGVSS. 2 disulfide bridges follow: Cys69-Cys163 and Cys180-Cys188.

This sequence belongs to the somatotropin/prolactin family.

The protein localises to the secreted. Functionally, growth hormone plays an important role in growth control and is involved in the regulation of several anabolic processes. Implicated as an osmoregulatory substance important for seawater adaptation. This Paralichthys olivaceus (Bastard halibut) protein is Somatotropin (gh).